Reading from the N-terminus, the 435-residue chain is Adenylosuccinate synthetase (435 aa).

Residues 11–17 and 39–41 each bind GTP; these read GDEGKGK and GHT. The active-site Proton acceptor is the aspartate 12. Aspartate 12 and glycine 39 together coordinate Mg(2+). IMP is bound by residues 12–15, 37–40, threonine 128, arginine 142, glutamine 223, threonine 238, and arginine 302; these read DEGK and NAGH. Histidine 40 functions as the Proton donor in the catalytic mechanism. A substrate-binding site is contributed by 298-304; the sequence is SVTGRPR. GTP contacts are provided by residues arginine 304, 330-332, and 412-414; these read KLD and STG.

It belongs to the adenylosuccinate synthetase family. In terms of assembly, homodimer. The cofactor is Mg(2+).

Its subcellular location is the cytoplasm. It catalyses the reaction IMP + L-aspartate + GTP = N(6)-(1,2-dicarboxyethyl)-AMP + GDP + phosphate + 2 H(+). The protein operates within purine metabolism; AMP biosynthesis via de novo pathway; AMP from IMP: step 1/2. Its function is as follows. Plays an important role in the de novo pathway of purine nucleotide biosynthesis. Catalyzes the first committed step in the biosynthesis of AMP from IMP. The protein is Adenylosuccinate synthetase of Coxiella burnetii (strain RSA 331 / Henzerling II).